Here is a 298-residue protein sequence, read N- to C-terminus: tRNA dimethylallyltransferase (298 aa).

Residue 10–17 coordinates ATP; the sequence is GATATGKS. 12-17 provides a ligand contact to substrate; it reads TATGKS. Positions 35 to 38 are interaction with substrate tRNA; sequence DSRQ.

This sequence belongs to the IPP transferase family. Monomer. It depends on Mg(2+) as a cofactor.

It carries out the reaction adenosine(37) in tRNA + dimethylallyl diphosphate = N(6)-dimethylallyladenosine(37) in tRNA + diphosphate. Catalyzes the transfer of a dimethylallyl group onto the adenine at position 37 in tRNAs that read codons beginning with uridine, leading to the formation of N6-(dimethylallyl)adenosine (i(6)A). This is tRNA dimethylallyltransferase from Picosynechococcus sp. (strain ATCC 27264 / PCC 7002 / PR-6) (Agmenellum quadruplicatum).